Consider the following 536-residue polypeptide: Maintenance of mitochondrial morphology protein 1 (536 aa).

At 1–25 (MAGPSNQTQPPPPVLTQPSLSFTQG) the chain is on the lumenal side. A helical membrane pass occupies residues 26–46 (LLVGQLSVVLLIGAFIKFFIF). Over 47-536 (GEAPPHPSRN…GSMPDPVVVT (490 aa)) the chain is Cytoplasmic. Disordered regions lie at residues 52-135 (HPSR…SHQP), 275-331 (GPGT…ATAA), 416-467 (GRTG…GGSM), and 505-536 (YGGA…VVVT). Polar residues-rich tracts occupy residues 69 to 81 (YSLN…SSPR), 88 to 105 (STSN…NTRS), and 112 to 121 (YSATPTNPTS). Over residues 122–132 (KHSRSRPHHSS) the composition is skewed to basic residues. The SMP-LTD domain occupies 134-409 (QPESLDWFNV…EPRVQVVGLP (276 aa)). A compositionally biased stretch (low complexity) spans 321–331 (TNTNTAGATAA). 2 stretches are compositionally biased toward gly residues: residues 442–467 (TAGG…GGSM) and 507–517 (GAQGGGGGGGR).

The protein belongs to the MMM1 family. Homodimer. Component of the ER-mitochondria encounter structure (ERMES) or MDM complex, composed of MMM1, MDM10, MDM12 and MDM34. An MMM1 homodimer associates with one molecule of MDM12 on each side in a pairwise head-to-tail manner, and the SMP-LTD domains of MMM1 and MDM12 generate a continuous hydrophobic tunnel for phospholipid trafficking.

The protein resides in the endoplasmic reticulum membrane. In terms of biological role, component of the ERMES/MDM complex, which serves as a molecular tether to connect the endoplasmic reticulum (ER) and mitochondria. Components of this complex are involved in the control of mitochondrial shape and protein biogenesis, and function in nonvesicular lipid trafficking between the ER and mitochondria. The MDM12-MMM1 subcomplex functions in the major beta-barrel assembly pathway that is responsible for biogenesis of all outer membrane beta-barrel proteins, and acts in a late step after the SAM complex. The MDM10-MDM12-MMM1 subcomplex further acts in the TOM40-specific pathway after the action of the MDM12-MMM1 complex. Essential for establishing and maintaining the structure of mitochondria and maintenance of mtDNA nucleoids. This chain is Maintenance of mitochondrial morphology protein 1, found in Ajellomyces dermatitidis (strain ER-3 / ATCC MYA-2586) (Blastomyces dermatitidis).